Here is a 398-residue protein sequence, read N- to C-terminus: Putative F-box protein At3g17620 (398 aa).

Residues 1 to 45 (MMSDLPRDLLEERLSRVPVKSLREARFTCKNWKTLSKKRSFTKKH) form the F-box domain.

The sequence is that of Putative F-box protein At3g17620 from Arabidopsis thaliana (Mouse-ear cress).